Reading from the N-terminus, the 262-residue chain is Small ribosomal subunit protein eS4y (262 aa).

Positions 42-104 (LPLVLIIRNR…TNENFRLLYD (63 aa)) constitute an S4 RNA-binding domain.

It belongs to the eukaryotic ribosomal protein eS4 family.

The protein localises to the cytoplasm. This is Small ribosomal subunit protein eS4y (RPS4B) from Arabidopsis thaliana (Mouse-ear cress).